A 266-amino-acid polypeptide reads, in one-letter code: HLA class II histocompatibility antigen, DRB1 beta chain (266 aa).

The first 29 residues, 1–29, serve as a signal peptide directing secretion; sequence MVCLKLPGGSCMTALTVTLMVLSSPLALS. The interval 30–124 is beta-1; the sequence is GDTRPRFLWQ…VESFTVQRRV (95 aa). Topologically, residues 30–227 are extracellular; it reads GDTRPRFLWQ…RARSESAQSK (198 aa). Cys44 and Cys108 form a disulfide bridge. Asn48 carries an N-linked (GlcNAc...) asparagine glycan. Positions 86, 90, 110, 111, and 122 each coordinate a peptide antigen. Positions 125 to 227 are beta-2; that stretch reads QPKVTVYPSK…RARSESAQSK (103 aa). Residues 126-214 enclose the Ig-like C1-type domain; it reads PKVTVYPSKT…EHPSVTSPLT (89 aa). Residues Cys146 and Cys202 are joined by a disulfide bond. Residues 228–248 traverse the membrane as a helical segment; that stretch reads MLSGVGGFVLGLLFLGAGLFI. At 249 to 266 the chain is on the cytoplasmic side; it reads YFRNQKGHSGLQPTGFLS. Lys254 participates in a covalent cross-link: Glycyl lysine isopeptide (Lys-Gly) (interchain with G-Cter in ubiquitin).

Heterotrimer that consists of an alpha chain HLA-DRA, a beta chain HLA-DRB1 and a peptide (peptide-MHCII). Newly synthesized alpha and beta chains forms a heterodimer (MHCII) that associates with the CD74/invariant chain (Ii) in the endoplasmic reticulum (ER). Ii is a trimer composed of three subunits and each subunit interacts with one MHCII dimer, blocking the peptide-binding cleft. As a result, MHCII molecules cannot bind peptides present in the ER. The complex of MHCII and CD74/Ii is transported in vesicles from ER to Golgi to lysosomes, where it encounters antigenic peptides generated via proteolysis of endocytosed antigens. MHCII dimers are dissociated from CD74/Ii by the combined action of proteolysis and HLA-DM. Lysosomal enzymes such as cathepsin, degrade CD74/Ii leaving a 24 amino acid remnant called class II-associated Ii or CLIP. Interacts (via the peptide binding cleft) with CLIP; this interaction inhibits antigen peptide binding before entry in the endosomal compartment. The displacement of CLIP and replacement by a high affinity peptide in lysosomes is performed by HLA-DM heterodimer. HLA-DM catalyzes CLIP dissociation from MHCII, stabilizes empty MHCII and mediates the selection of high affinity peptides. Interacts with HLA-DM heterodimer; this interaction is direct. Interacts with TCR (via CDR3). Interacts (via beta-2 domain) with CD4 coreceptor (via Ig-like V-type domain); this interaction is of exceptionally low affinity yet necessary for optimal recognition of antigenic peptides. In terms of assembly, (Microbial infection) Interacts with Staphylococcus aureus enterotoxin A/entA, enterotoxin B/entB, enterotoxin C1/entC1, enterotoxin D/entD and enterotoxin H/entH. Enterotoxins bind outside the peptide-binding cleft of MHCII: enterotoxin H/entH interacts via the beta-1 domain of MHCII and in a zinc-dependent way, whereas enterotoxin B/entB interacts primarily via the alpha-1 domain. As to quaternary structure, (Microbial infection) Interacts with Epstein-Barr virus gp42 protein. Ubiquitinated by MARCHF1 and MARCHF8 at Lys-254 leading to sorting into the endosome system and down-regulation of MHCII. Expressed in professional APCs: monocyte/macrophages, dendritic cells and B cells (at protein level). Expressed in thymic epithelial cells (at protein level).

It localises to the cell membrane. The protein localises to the endoplasmic reticulum membrane. Its subcellular location is the lysosome membrane. The protein resides in the late endosome membrane. It is found in the autolysosome membrane. A beta chain of antigen-presenting major histocompatibility complex class II (MHCII) molecule. In complex with the alpha chain HLA-DRA, displays antigenic peptides on professional antigen presenting cells (APCs) for recognition by alpha-beta T cell receptor (TCR) on HLA-DRB1-restricted CD4-positive T cells. This guides antigen-specific T-helper effector functions, both antibody-mediated immune response and macrophage activation, to ultimately eliminate the infectious agents and transformed cells. Typically presents extracellular peptide antigens of 10 to 30 amino acids that arise from proteolysis of endocytosed antigens in lysosomes. In the tumor microenvironment, presents antigenic peptides that are primarily generated in tumor-resident APCs likely via phagocytosis of apoptotic tumor cells or macropinocytosis of secreted tumor proteins. Presents peptides derived from intracellular proteins that are trapped in autolysosomes after macroautophagy, a mechanism especially relevant for T cell selection in the thymus and central immune tolerance. The selection of the immunodominant epitopes follows two processing modes: 'bind first, cut/trim later' for pathogen-derived antigenic peptides and 'cut first, bind later' for autoantigens/self-peptides. The anchor residue at position 1 of the peptide N-terminus, usually a large hydrophobic residue, is essential for high affinity interaction with MHCII molecules. In terms of biological role, allele DRB1*01:01: Displays an immunodominant epitope derived from Bacillus anthracis pagA/protective antigen, PA (KLPLYISNPNYKVNVYAVT), to both naive and PA-specific memory CD4-positive T cells. Presents immunodominant HIV-1 gag peptide (FRDYVDRFYKTLRAEQASQE) on infected dendritic cells for recognition by TRAV24-TRBV2 TCR on CD4-positive T cells and controls viral load. May present to T-helper 1 cells several HRV-16 epitopes derived from capsid proteins VP1 (PRFSLPFLSIASAYYMFYDG) and VP2 (PHQFINLRSNNSATLIVPYV), contributing to viral clearance. Displays commonly recognized peptides derived from IAV external protein HA (PKYVKQNTLKLAT and SNGNFIAPEYAYKIVK) and from internal proteins M, NP and PB1, with M-derived epitope (GLIYNRMGAVTTEV) being the most immunogenic. Presents a self-peptide derived from COL4A3 (GWISLWKGFSF) to TCR (TRAV14 biased) on CD4-positive, FOXP3-positive regulatory T cells and mediates immune tolerance to self. May present peptides derived from oncofetal trophoblast glycoprotein TPBG 5T4, known to be recognized by both T-helper 1 and regulatory T cells. Displays with low affinity a self-peptide derived from MBP (VHFFKNIVTPRTP). Its function is as follows. Allele DRB1*03:01: May present to T-helper 1 cells an HRV-16 epitope derived from capsid protein VP2 (NEKQPSDDNWLNFDGTLLGN), contributing to viral clearance. Displays self-peptides derived from retinal SAG (NRERRGIALDGKIKHE) and thyroid TG (LSSVVVDPSIRHFDV). Presents viral epitopes derived from HHV-6B gH/U48 and U85 antigens to polyfunctional CD4-positive T cells with cytotoxic activity implicated in control of HHV-6B infection. Presents several immunogenic epitopes derived from C.tetani neurotoxin tetX, playing a role in immune recognition and long-term protection. Functionally, allele DRB1*04:01: Presents an immunodominant bacterial epitope derived from M.tuberculosis esxB/culture filtrate antigen CFP-10 (EISTNIRQAGVQYSR), eliciting CD4-positive T cell effector functions such as IFNG production and cytotoxic activity. May present to T-helper 1 cells an HRV-16 epitope derived from capsid protein VP2 (NEKQPSDDNWLNFDGTLLGN), contributing to viral clearance. Presents tumor epitopes derived from melanoma-associated TYR antigen (QNILLSNAPLGPQFP and DYSYLQDSDPDSFQD), triggering CD4-positive T cell effector functions such as GMCSF production. Displays preferentially citrullinated self-peptides derived from VIM (GVYATR/citSSAVR and SAVRAR/citSSVPGVR) and ACAN (VVLLVATEGR/ CitVRVNSAYQDK). Displays self-peptides derived from COL2A1. Allele DRB1*04:02: Displays native or citrullinated self-peptides derived from VIM. In terms of biological role, allele DRB1*04:04: May present to T-helper 1 cells several HRV-16 epitopes derived from capsid proteins VP1 (HIVMQYMYVPPGAPIPTTRN) and VP2 (RGDSTITSQDVANAVVGYGV), contributing to viral clearance. Displays preferentially citrullinated self-peptides derived from VIM (SAVRAR/citSSVPGVR). Its function is as follows. Allele DRB1*04:05: May present to T-helper 1 cells an immunogenic epitope derived from tumor-associated antigen WT1 (KRYFKLSHLQMHSRKH), likely providing for effective antitumor immunity in a wide range of solid and hematological malignancies. Functionally, allele DRB1*05:01: Presents an immunodominant HIV-1 gag peptide (FRDYVDRFYKTLRAEQASQE) on infected dendritic cells for recognition by TRAV24-TRBV2 TCR on CD4-positive T cells and controls viral load. Allele DRB1*07:01: Upon EBV infection, presents latent antigen EBNA2 peptide (PRSPTVFYNIPPMPLPPSQL) to CD4-positive T cells, driving oligoclonal expansion and selection of a dominant virus-specific memory T cell subset with cytotoxic potential to directly eliminate virus-infected B cells. May present to T-helper 1 cells several HRV-16 epitopes derived from capsid proteins VP1 (PRFSLPFLSIASAYYMFYDG) and VP2 (VPYVNAVPMDSMVRHNNWSL), contributing to viral clearance. In the context of tumor immunesurveillance, may present to T-helper 1 cells an immunogenic epitope derived from tumor-associated antigen WT1 (MTEYKLVVVGAVGVGKSALTIQLI), likely providing for effective antitumor immunity in a wide range of solid and hematological malignancies. In metastatic epithelial tumors, presents to intratumoral CD4-positive T cells a KRAS neoantigen (MTEYKLVVVGAVGVGKSALTIQLI) carrying G12V hotspot driver mutation and may mediate tumor regression. In terms of biological role, allele DRB1*11:01: Displays an immunodominant HIV-1 gag peptide (FRDYVDRFYKTLRAEQASQE) on infected dendritic cells for recognition by TRAV24-TRBV2 TCR on CD4-positive T cells and controls viral load. May present to T-helper 1 cells an HRV-16 epitope derived from capsid protein VP2 (SDRIIQITRGDSTITSQDVA), contributing to viral clearance. Presents several immunogenic epitopes derived from C.tetani neurotoxin tetX, playing a role in immune recognition and longterm protection. In the context of tumor immunesurveillance, may present tumor-derived neoantigens to CD4-positive T cells and trigger anti-tumor helper functions. Its function is as follows. Allele DRB1*13:01: Presents viral epitopes derived from HHV-6B antigens to polyfunctional CD4-positive T cells implicated in control of HHV-6B infection. Functionally, allele DRB1*15:01: May present to T-helper 1 cells an HRV-16 epitope derived from capsid protein VP2 (SNNSATLIVPYVNAVPMDSM), contributing to viral clearance. Displays a self-peptide derived from MBP (ENPVVHFFKNIVTPR). May present to T-helper 1 cells an immunogenic epitope derived from tumor-associated antigen WT1 (KRYFKLSHLQMHSRKH), likely providing for effective antitumor immunity in a wide range of solid and hematological malignancies. Allele DRB1*15:02: Displays an immunodominant HIV-1 gag peptide (FRDYVDRFYKTLRAEQASQE) on infected dendritic cells for recognition by TRAV24-TRBV2 TCR on CD4-positive T cells and controls viral load. May present to T-helper 1 cells an immunogenic epitope derived from tumor-associated antigen WT1 (KRYFKLSHLQMHSRKH), likely providing for effective antitumor immunity in a wide range of solid and hematological malignancies. In terms of biological role, (Microbial infection) Acts as a receptor for Epstein-Barr virus on lymphocytes. This chain is HLA class II histocompatibility antigen, DRB1 beta chain, found in Homo sapiens (Human).